A 245-amino-acid chain; its full sequence is LOB domain-containing protein 16 (245 aa).

In terms of domain architecture, LOB spans 14–116; it reads SPCGACKFLR…SQVMQMKAQI (103 aa). The segment at 162 to 183 is disordered; it reads YYGHVNPNNPVSPQSSLEESFS.

This sequence belongs to the LOB domain-containing protein family. Homodimer and heterodimer with LBD18. In terms of tissue distribution, expressed in roots and faintly in shoots.

The protein resides in the nucleus. In terms of biological role, transcriptional activator. Involved in lateral root formation. Regulated by the transcriptional activators ARF7 and ARF19. Functions in the initiation and emergence of lateral roots, in conjunction with LBD18, downstream of ARF7 and ARF19. Acts downstream of the auxin influx carriers AUX1 and LAX1 in the regulation of lateral root initiation and development. The polypeptide is LOB domain-containing protein 16 (LBD16) (Arabidopsis thaliana (Mouse-ear cress)).